Reading from the N-terminus, the 388-residue chain is 5-hydroxytryptamine receptor 4 (388 aa).

Residues 1-19 (MDKLDANVSSEEGFGSVEK) lie on the Extracellular side of the membrane. N7 carries an N-linked (GlcNAc...) asparagine glycan. The helical transmembrane segment at 20-44 (VVLLTFLSTVILMAILGNLLVMVAV) threads the bilayer. Residues 45 to 54 (CWDRQLRKIK) are Cytoplasmic-facing. A helical transmembrane segment spans residues 55 to 78 (TNYFIVSLAFADLLVSVLVMPFGA). Over 79–92 (IELVQDIWIYGEVF) the chain is Extracellular. Residues 93–117 (CLVRTSLDVLLTTASIFHLCCISLD) traverse the membrane as a helical segment. C93 and C184 form a disulfide bridge. D100 lines the serotonin pocket. Over 118 to 133 (RYYAICCQPLVYRNKM) the chain is Cytoplasmic. Residues 134-157 (TPLRIALMLGGCWVIPTFISFLPI) form a helical membrane-spanning segment. Residues 158 to 188 (MQGWNNIGIIDLIEKRKFNQNSNSTYCVFMV) are Extracellular-facing. Residues 189 to 212 (NKPYAITCSVVAFYIPFLLMVLAY) form a helical membrane-spanning segment. At 213-257 (YRIYVTAKEHAHQIQMLQRAGASSESRPQSADQHSTHRMRTETKA) the chain is on the cytoplasmic side. Residues 258–283 (AKTLCIIMGCFCLCWAPFFVTNIVDP) traverse the membrane as a helical segment. Residue N279 participates in serotonin binding. The Extracellular segment spans residues 284 to 290 (FIDYTVP). The chain crosses the membrane as a helical span at residues 291-314 (GQVWTAFLWLGYINSGLNPFLYAF). The Cytoplasmic portion of the chain corresponds to 315 to 388 (LNKSFRRAFL…PLVAAQPSDT (74 aa)).

It belongs to the G-protein coupled receptor 1 family. In terms of assembly, interacts (via C-terminus 330-346 AA) with GRK5; this interaction is promoted by 5-HT (serotonin). Interacts with MAGI2, MPP3, NHERF1 and SNX27 isoforms 1 and 2. Forms a complex including NHERF1 and EZR. As to quaternary structure, interacts with PATJ, NOS1 and SEC23A. As to expression, expressed in ileum, brain, and atrium, but not in the ventricle. In terms of tissue distribution, mainly expressed in atria and cardiac ventricle. Expressed in all cardiovascular tissues analyzed.

The protein localises to the cell membrane. It is found in the endosome membrane. G-protein coupled receptor for 5-hydroxytryptamine (serotonin), a biogenic hormone that functions as a neurotransmitter, a hormone and a mitogen. Ligand binding causes a conformation change that triggers signaling via guanine nucleotide-binding proteins (G proteins) and modulates the activity of downstream effectors. HTR4 is coupled to G(s) G alpha proteins and mediates activation of adenylate cyclase activity. The polypeptide is 5-hydroxytryptamine receptor 4 (Homo sapiens (Human)).